We begin with the raw amino-acid sequence, 359 residues long: Cytokine receptor-like factor 2 (359 aa).

The signal sequence occupies residues 1–19; sequence MAWALAVILLPRLLAAAAA. Over 20–232 the chain is Extracellular; that stretch reads AAAVTSRGDV…PAPSPALAPP (213 aa). N-linked (GlcNAc...) asparagine glycosylation occurs at Asn53. A disulfide bridge links Cys68 with Cys82. One can recognise a Fibronectin type-III domain in the interval 119 to 213; it reads PPWNVTLLWT…WTAVTRLSGA (95 aa). Asn122 is a glycosylation site (N-linked (GlcNAc...) asparagine). Disulfide bonds link Cys168-Cys169 and Cys181-Cys219. The short motif at 201 to 205 is the WSXWS motif element; that stretch reads PSEWT. A helical membrane pass occupies residues 233 to 253; sequence LLPLGCGLAALLTLSLLLAAL. Over 254–359 the chain is Cytoplasmic; it reads RLRRVKDALL…MVGDSGYMTL (106 aa). The Box 1 motif motif lies at 262–270; the sequence is LLPCVPDPS. Positions 312–336 are disordered; it reads KRVEPEDGTSLCTVPRPPSFEPRGP.

This sequence belongs to the type I cytokine receptor family. Type 5 subfamily. In terms of assembly, the TSLP receptor is a heterodimer of CRLF2 and IL7R. Binding of TSLP to CRLF2/TSLPR is a mechanistic prerequisite for recruitment of IL7R to the high-affinity ternary complex. High level of expression in liver, lung and testis. Also expressed in heart, brain, spleen, thymus and bone marrow. Highly expressed in progenitors and myeloid cells. Isoform 2 is expressed in primary hemotopoietic cells.

The protein localises to the cell membrane. The protein resides in the secreted. Receptor for thymic stromal lymphopoietin (TSLP). Forms a functional complex with TSLP and IL7R which is capable of stimulating cell proliferation through activation of STAT3 and STAT5. Also activates JAK2. Implicated in the development of the hematopoietic system. The protein is Cytokine receptor-like factor 2 (Crlf2) of Mus musculus (Mouse).